The chain runs to 615 residues: MATPPPLRRVAALLLLLVAAASTPTARADLVVTRADRKVDLTSHIVRVLTSLKVENSGPEAVSQFLLAFPNVQAKNLAAIRAFGTEEKVKGPSMVLPIEVVQPSGVPPELTFFSASLSKPLEKGKTLHLDVLTVFTHSVQPFPEEITQAESQLVVYQDSAQYLSPYPVKVQTLSIRLPGGRVESYTKYPNTKLAESELKYGPYEDLPPFSYSPMVVHYENNNPFAVAKEVIREIEISHWGNVQITEHYNIAHGGAKLKGEFSRIDYQSRPYIRGVSSFRHLIARLPPRAHSIYYRDEIGNISTSHLWSDSKKTQLEVEPRFPLFGGWQTTFTIGYGLPLQDFVFNSDGKRFLNITFGSPVEEILIEKLIVKVVLPEGSKDIDISVPFPTKQEQEVKYSHLDISGRPVVVLEKLDVIPEHNLYFQVYYRFNNISLLREPMMLITGFFLLFMACIVYMRTDMSISKNSPSYLAKVQWDEVQSIIQQIQAIFNQCLAAHDKLETSLHELSRSGDVKSCKVARKTADAQFKELAKELKPLLTSLQSSSQSYQIWPKVEELVAKERELQDKLMTRHSTVVDSFEKKLRGQDVENRIAAQQQKVAALRQEVESLLEYISEI.

The N-terminal stretch at 1-28 (MATPPPLRRVAALLLLLVAAASTPTARA) is a signal peptide. The Lumenal portion of the chain corresponds to 29–437 (DLVVTRADRK…RFNNISLLRE (409 aa)). K187 bears the N6-acetyllysine mark. N300, N353, and N431 each carry an N-linked (GlcNAc...) asparagine glycan. A helical transmembrane segment spans residues 438–455 (PMMLITGFFLLFMACIVY). Topologically, residues 456 to 615 (MRTDMSISKN…ESLLEYISEI (160 aa)) are cytoplasmic.

Belongs to the OST1 family. In terms of assembly, component of the oligosaccharyltransferase (OST) complex.

The protein resides in the endoplasmic reticulum membrane. The protein operates within protein modification; protein glycosylation. In terms of biological role, subunit of the oligosaccharyl transferase (OST) complex that catalyzes the initial transfer of a defined glycan (Glc(3)Man(9)GlcNAc(2) in eukaryotes) from the lipid carrier dolichol-pyrophosphate to an asparagine residue within an Asn-X-Ser/Thr consensus motif in nascent polypeptide chains, the first step in protein N-glycosylation. N-glycosylation occurs cotranslationally and the complex associates with the Sec61 complex at the channel-forming translocon complex that mediates protein translocation across the endoplasmic reticulum (ER). All subunits are required for a maximal enzyme activity. This is Dolichyl-diphosphooligosaccharide--protein glycosyltransferase subunit 1A (OST1A) from Oryza sativa subsp. japonica (Rice).